Here is a 339-residue protein sequence, read N- to C-terminus: Dihydroorotate dehydrogenase (quinone) (339 aa).

FMN-binding positions include 61 to 65 (AGLDK) and T85. Position 65 (K65) interacts with substrate. 110–114 (NRMGF) lines the substrate pocket. FMN contacts are provided by N138 and N171. A substrate-binding site is contributed by N171. Catalysis depends on S174, which acts as the Nucleophile. Position 176 (N176) interacts with substrate. The FMN site is built by K216 and T244. 245–246 (NT) serves as a coordination point for substrate. FMN is bound by residues G267, G296, and 317–318 (YS).

The protein belongs to the dihydroorotate dehydrogenase family. Type 2 subfamily. Monomer. It depends on FMN as a cofactor.

The protein resides in the cell membrane. The enzyme catalyses (S)-dihydroorotate + a quinone = orotate + a quinol. It participates in pyrimidine metabolism; UMP biosynthesis via de novo pathway; orotate from (S)-dihydroorotate (quinone route): step 1/1. Catalyzes the conversion of dihydroorotate to orotate with quinone as electron acceptor. This chain is Dihydroorotate dehydrogenase (quinone), found in Pseudomonas fluorescens (strain ATCC BAA-477 / NRRL B-23932 / Pf-5).